The sequence spans 255 residues: Endonuclease 8 2 (255 aa).

Catalysis depends on proline 2, which acts as the Schiff-base intermediate with DNA. Glutamate 3 serves as the catalytic Proton donor. Lysine 51 (proton donor; for beta-elimination activity) is an active-site residue. 2 residues coordinate DNA: glutamine 67 and asparagine 164. Residues 221–255 (WVYGRAGQGCRRCGTLIAYDTTDERVRYWCPACQR) form an FPG-type zinc finger. The active-site Proton donor; for delta-elimination activity is arginine 245.

It belongs to the FPG family. Requires Zn(2+) as cofactor.

The enzyme catalyses 2'-deoxyribonucleotide-(2'-deoxyribose 5'-phosphate)-2'-deoxyribonucleotide-DNA = a 3'-end 2'-deoxyribonucleotide-(2,3-dehydro-2,3-deoxyribose 5'-phosphate)-DNA + a 5'-end 5'-phospho-2'-deoxyribonucleoside-DNA + H(+). Functionally, involved in base excision repair of DNA damaged by oxidation or by mutagenic agents. Acts as a DNA glycosylase that recognizes and removes damaged bases. Has AP (apurinic/apyrimidinic) lyase activity and introduces nicks in the DNA strand. Cleaves the DNA backbone by beta-delta elimination to generate a single-strand break at the site of the removed base with both 3'- and 5'-phosphates. The protein is Endonuclease 8 2 (nei2) of Mycobacterium bovis (strain ATCC BAA-935 / AF2122/97).